A 195-amino-acid polypeptide reads, in one-letter code: Imidazoleglycerol-phosphate dehydratase (195 aa).

It belongs to the imidazoleglycerol-phosphate dehydratase family.

The protein resides in the cytoplasm. The catalysed reaction is D-erythro-1-(imidazol-4-yl)glycerol 3-phosphate = 3-(imidazol-4-yl)-2-oxopropyl phosphate + H2O. It functions in the pathway amino-acid biosynthesis; L-histidine biosynthesis; L-histidine from 5-phospho-alpha-D-ribose 1-diphosphate: step 6/9. The chain is Imidazoleglycerol-phosphate dehydratase from Exiguobacterium sp. (strain ATCC BAA-1283 / AT1b).